The chain runs to 1088 residues: PAN2-PAN3 deadenylation complex catalytic subunit pan2 (1088 aa).

WD repeat units follow at residues 16–56 (VSTC…YTQF), 136–175 (HKDKNVSDIFIMRRNRLLCCGSTNGEIILRDPNSFQPVNK), 178–224 (AHTG…SLVP), and 270–309 (PLTSYLTGMDIASTGDAMVFTDVEDNIHLWSPLENPSFSD). A linker region spans residues 309–443 (DLKLPIQLPN…EDTISGPDSI (135 aa)). The USP domain maps to 443 to 814 (IPKFYQRPVI…IPIIVYYEKL (372 aa)). The Exonuclease domain occupies 860–1033 (VGIDSEFVAL…EDALTALKLY (174 aa)). The a divalent metal cation site is built by Asp863, Glu865, Asp972, and Asp1025.

It belongs to the peptidase C19 family. PAN2 subfamily. As to quaternary structure, forms a heterotrimer with an asymmetric homodimer of the regulatory subunit ppk26/pan3 to form the poly(A)-nuclease (PAN) deadenylation complex. The cofactor is a divalent metal cation.

It is found in the cytoplasm. It carries out the reaction Exonucleolytic cleavage of poly(A) to 5'-AMP.. Its activity is regulated as follows. Positively regulated by the regulatory subunit ppk26/pan3. In terms of biological role, catalytic subunit of the poly(A)-nuclease (PAN) deadenylation complex, one of two cytoplasmic mRNA deadenylases involved in mRNA turnover. PAN specifically shortens poly(A) tails of RNA and the activity is stimulated by poly(A)-binding protein pab1. PAN deadenylation is followed by rapid degradation of the shortened mRNA tails by the CCR4-NOT complex. Deadenylated mRNAs are then degraded by two alternative mechanisms, namely exosome-mediated 3'-5' exonucleolytic degradation, or deadenylation-dependent mRNA decaping and subsequent 5'-3' exonucleolytic degradation by xrn1. May also be involved in post-transcriptional maturation of mRNA poly(A) tails. This Schizosaccharomyces pombe (strain 972 / ATCC 24843) (Fission yeast) protein is PAN2-PAN3 deadenylation complex catalytic subunit pan2.